A 323-amino-acid chain; its full sequence is Sphingolipid delta(4)-desaturase DES1 (323 aa).

G2 carries the N-myristoyl glycine lipid modification. 2 helical membrane-spanning segments follow: residues 41–61 (PNLI…FYIV) and 68–88 (WVIF…TLAI). The short motif at 89–93 (HEIAH) is the Histidine box-1 element. A helical membrane pass occupies residues 102-122 (AMWNRWFGMFANLPIGIPYSI). The Histidine box-2 signature appears at 128–132 (HMDHH). A run of 3 helical transmembrane segments spans residues 152-172 (FFCT…FYAF), 184-204 (YLEV…YYFL), and 209-229 (LVYM…SGHF). The Histidine box-3 motif lies at 259-263 (HNEHH). S307 carries the phosphoserine modification.

It belongs to the fatty acid desaturase type 1 family. DEGS subfamily. As to quaternary structure, interacts with RLBP1; the interaction increases synthesis of chromophore-precursors by DEGS1. In terms of processing, myristoylation can target the enzyme to the mitochondria leading to an increase in ceramide levels. As to expression, ubiquitous.

The protein localises to the mitochondrion membrane. It localises to the endoplasmic reticulum membrane. The catalysed reaction is an N-acylsphinganine + 2 Fe(II)-[cytochrome b5] + O2 + 2 H(+) = an N-acylsphing-4-enine + 2 Fe(III)-[cytochrome b5] + 2 H2O. The enzyme catalyses all-trans-retinol = 11-cis-retinol. It catalyses the reaction all-trans-retinol = 9-cis-retinol. It carries out the reaction all-trans-retinol = 13-cis-retinol. The catalysed reaction is 11-cis-retinol = 13-cis-retinol. The enzyme catalyses 11-cis-retinol = 9-cis-retinol. Has sphingolipid-delta-4-desaturase activity. Converts D-erythro-sphinganine to D-erythro-sphingosine (E-sphing-4-enine). Catalyzes the equilibrium isomerization of retinols. This Homo sapiens (Human) protein is Sphingolipid delta(4)-desaturase DES1.